Consider the following 336-residue polypeptide: NADH-cytochrome b5 reductase 2 (336 aa).

Residues 28–50 traverse the membrane as a helical segment; the sequence is GGSSNGALYVGIGAAGLAGAYIY. In terms of domain architecture, FAD-binding FR-type spans 84–189; sequence QGFISLLLDK…KGPIPKYPWS (106 aa). 192–227 contributes to the FAD binding site; sequence KHEHIALIAGGTGITPMWQTARAIFKNPEDKTKVTL.

The protein belongs to the flavoprotein pyridine nucleotide cytochrome reductase family. FAD serves as cofactor.

It localises to the mitochondrion outer membrane. The enzyme catalyses 2 Fe(III)-[cytochrome b5] + NADH = 2 Fe(II)-[cytochrome b5] + NAD(+) + H(+). Its function is as follows. May mediate the reduction of outer membrane cytochrome b5. In Phaeosphaeria nodorum (strain SN15 / ATCC MYA-4574 / FGSC 10173) (Glume blotch fungus), this protein is NADH-cytochrome b5 reductase 2 (MCR1).